Here is a 426-residue protein sequence, read N- to C-terminus: Protein PHOSPHATE STARVATION RESPONSE 2 (426 aa).

Disordered regions lie at residues 27–81 (ATLD…PLRS), 96–123 (YTNA…QYGG), and 198–247 (TQPQ…NSKT). Positions 69 to 81 (FQSSTGSVGPLRS) are enriched in polar residues. Composition is skewed to low complexity over residues 102–119 (YNSQ…NYGS) and 205–225 (AAQS…SSQS). Polar residues predominate over residues 237–246 (SGASNTSNSK). In terms of domain architecture, HTH myb-type spans 243–303 (SNSKTRMRWT…HLQKYRTARY (61 aa)). The H-T-H motif DNA-binding region spans 274-299 (PKGVLKLMKADNLTIYHVKSHLQKYR). 2 disordered regions span residues 302–326 (RYRP…PSID) and 382–426 (DKAV…SGDR). The span at 303 to 322 (YRPELSEGSSEKKAASKEDI) shows a compositional bias: basic and acidic residues. Composition is skewed to polar residues over residues 387 to 401 (ASTS…SDLP) and 411 to 426 (ENSQ…SGDR).

Interacts (via C-terminus) with SPX4 (via N-terminus) in the presence of inositol polyphosphate. Interacts (via C-terminus) with SPX1 and SPX2 (via SPX domain). Interacts with RLI1 in the nucleus.

It localises to the nucleus. It is found in the cytoplasm. Transcription factor involved in phosphate starvation signaling. Binds to P1BS, an imperfect palindromic sequence 5'-GNATATNC-3', to promote the expression of inorganic phosphate (Pi) starvation-responsive genes. Functionally redundant with PHR1 and PHR3 in regulating Pi starvation response and Pi homeostasis. Involved in both systematic and local Pi-signaling pathways. Regulates several Pi transporters. PHR2 binding to DNA is repressed redundantly by SPX1, SPX2 and SPX4 in a PI-dependent manner. The DNA-binding activity is also repressed by SPX4. Involved in root growth under Pi deprivation. Involved in the modulation of Pi response and homeostasis together with RLI1; promotes RLI1 expression in response to nitrate availability, thus triggering the nitrate-induced phosphate response (NIPR). The protein is Protein PHOSPHATE STARVATION RESPONSE 2 of Oryza sativa subsp. indica (Rice).